A 202-amino-acid polypeptide reads, in one-letter code: Dephospho-CoA kinase (202 aa).

Positions 4–201 (VIGLTGGIAS…QKYLAMSKQN (198 aa)) constitute a DPCK domain. 12–17 (ASGKTT) lines the ATP pocket.

It belongs to the CoaE family.

It is found in the cytoplasm. The enzyme catalyses 3'-dephospho-CoA + ATP = ADP + CoA + H(+). It participates in cofactor biosynthesis; coenzyme A biosynthesis; CoA from (R)-pantothenate: step 5/5. In terms of biological role, catalyzes the phosphorylation of the 3'-hydroxyl group of dephosphocoenzyme A to form coenzyme A. The protein is Dephospho-CoA kinase of Vibrio vulnificus (strain CMCP6).